We begin with the raw amino-acid sequence, 221 residues long: Germin-like protein 8-2 (221 aa).

The first 24 residues, 1–24 (MASSSFSFLLVAALLGLASWKAIA), serve as a signal peptide directing secretion. An intrachain disulfide couples Cys-34 to Cys-49. 2 N-linked (GlcNAc...) asparagine glycosylation sites follow: Asn-54 and Asn-79. One can recognise a Cupin type-1 domain in the interval 64 to 215 (AMLDKPRDTN…AFQVDKKIID (152 aa)). Residues His-112, His-114, Glu-119, and His-160 each coordinate Mn(2+).

This sequence belongs to the germin family. In terms of assembly, oligomer (believed to be a pentamer but probably hexamer).

The protein localises to the secreted. It localises to the extracellular space. Its subcellular location is the apoplast. In terms of biological role, plays a role in broad-spectrum disease resistance. Probably has no oxalate oxidase activity even if the active site is conserved. The chain is Germin-like protein 8-2 (GER3) from Oryza sativa subsp. japonica (Rice).